A 324-amino-acid chain; its full sequence is o-succinylbenzoate synthase (324 aa).

Residue Lys-135 is the Proton donor of the active site. Mg(2+)-binding residues include Asp-163, Glu-192, and Asp-215. The Proton acceptor role is filled by Lys-237.

It belongs to the mandelate racemase/muconate lactonizing enzyme family. MenC type 1 subfamily. It depends on a divalent metal cation as a cofactor.

It catalyses the reaction (1R,6R)-6-hydroxy-2-succinyl-cyclohexa-2,4-diene-1-carboxylate = 2-succinylbenzoate + H2O. Its pathway is quinol/quinone metabolism; 1,4-dihydroxy-2-naphthoate biosynthesis; 1,4-dihydroxy-2-naphthoate from chorismate: step 4/7. It participates in quinol/quinone metabolism; menaquinone biosynthesis. Its function is as follows. Converts 2-succinyl-6-hydroxy-2,4-cyclohexadiene-1-carboxylate (SHCHC) to 2-succinylbenzoate (OSB). The polypeptide is o-succinylbenzoate synthase (Aliivibrio fischeri (strain MJ11) (Vibrio fischeri)).